We begin with the raw amino-acid sequence, 200 residues long: NADH-quinone oxidoreductase subunit C (200 aa).

Belongs to the complex I 30 kDa subunit family. As to quaternary structure, NDH-1 is composed of 14 different subunits. Subunits NuoB, C, D, E, F, and G constitute the peripheral sector of the complex.

The protein localises to the cell inner membrane. The enzyme catalyses a quinone + NADH + 5 H(+)(in) = a quinol + NAD(+) + 4 H(+)(out). NDH-1 shuttles electrons from NADH, via FMN and iron-sulfur (Fe-S) centers, to quinones in the respiratory chain. The immediate electron acceptor for the enzyme in this species is believed to be ubiquinone. Couples the redox reaction to proton translocation (for every two electrons transferred, four hydrogen ions are translocated across the cytoplasmic membrane), and thus conserves the redox energy in a proton gradient. This chain is NADH-quinone oxidoreductase subunit C, found in Rhizobium leguminosarum bv. trifolii (strain WSM2304).